Here is a 316-residue protein sequence, read N- to C-terminus: Leucine-rich repeat-containing protein 73 (316 aa).

7 LRR repeats span residues 57–78, 86–106, 114–137, 145–166, 174–187, 202–223, and 231–250; these read SLAQ…KQLA, SIQS…ALLN, ALVA…CGLL, GLKE…SRLA, QVRV…PLGD, TLEV…TLLD, and ALRS…QQQI. The tract at residues 257–296 is disordered; that stretch reads GEEEEEVAGGAGDTQEWERGREPAAHQRGSSSWMCPSDPS. Residues 272 to 281 show a composition bias toward basic and acidic residues; that stretch reads EWERGREPAA. Residues 286 to 296 are compositionally biased toward low complexity; the sequence is SSSWMCPSDPS.

This Homo sapiens (Human) protein is Leucine-rich repeat-containing protein 73 (LRRC73).